Consider the following 668-residue polypeptide: DNA-directed RNA polymerase subunit beta' (668 aa).

Zn(2+)-binding residues include C71, C73, C91, and C94. 3 residues coordinate Mg(2+): D505, D507, and D509.

Belongs to the RNA polymerase beta' chain family. RpoC1 subfamily. As to quaternary structure, in plastids the minimal PEP RNA polymerase catalytic core is composed of four subunits: alpha, beta, beta', and beta''. When a (nuclear-encoded) sigma factor is associated with the core the holoenzyme is formed, which can initiate transcription. Mg(2+) serves as cofactor. Requires Zn(2+) as cofactor.

The protein resides in the plastid. The protein localises to the chloroplast. The catalysed reaction is RNA(n) + a ribonucleoside 5'-triphosphate = RNA(n+1) + diphosphate. Its function is as follows. DNA-dependent RNA polymerase catalyzes the transcription of DNA into RNA using the four ribonucleoside triphosphates as substrates. The chain is DNA-directed RNA polymerase subunit beta' from Mesostigma viride (Green alga).